A 420-amino-acid chain; its full sequence is Glucose-1-phosphate adenylyltransferase (420 aa).

Alpha-D-glucose 1-phosphate contacts are provided by residues tyrosine 107, glycine 172, 187–188 (EK), and serine 205.

Belongs to the bacterial/plant glucose-1-phosphate adenylyltransferase family. Homotetramer.

The enzyme catalyses alpha-D-glucose 1-phosphate + ATP + H(+) = ADP-alpha-D-glucose + diphosphate. The protein operates within glycan biosynthesis; glycogen biosynthesis. Involved in the biosynthesis of ADP-glucose, a building block required for the elongation reactions to produce glycogen. Catalyzes the reaction between ATP and alpha-D-glucose 1-phosphate (G1P) to produce pyrophosphate and ADP-Glc. The protein is Glucose-1-phosphate adenylyltransferase of Rhodopseudomonas palustris (strain BisB18).